The sequence spans 142 residues: Hdr-like menaquinol oxidoreductase cytochrome c subunit (142 aa).

The Cytoplasmic segment spans residues 1–6 (MYNKKY). The helical transmembrane segment at 7–27 (VIPLILVFLIGFFTPYWYNAM) threads the bilayer. At 28–142 (AGTLGHVPTL…GIEELSKYFS (115 aa)) the chain is on the extracellular side. Heme is bound by residues C93, C96, H97, C104, C107, H108, C117, C120, and H121.

As to quaternary structure, consists of five subunits: an integral membrane subunit, a cytochrome b-like subunit, a cytochrome c subunit and two iron-sulfur subunits. Binds 3 heme groups per subunit.

The protein resides in the cell membrane. Functionally, has menaquinol-oxidizing activity. HmeA, HmeB and HmeE subunits may together catalyze electron transfer from menaquinol to cytochrome c. This Archaeoglobus fulgidus (strain ATCC 49558 / DSM 4304 / JCM 9628 / NBRC 100126 / VC-16) protein is Hdr-like menaquinol oxidoreductase cytochrome c subunit (hmeE).